Reading from the N-terminus, the 465-residue chain is Alpha-galacturonidase (465 aa).

Residue 11-78 (ITIAYIGGGS…GKWLYKACET (68 aa)) coordinates NAD(+). Asn-157 contacts substrate. Cys-179 provides a ligand contact to Mn(2+). His-180 acts as the Proton donor in catalysis. His-216 is a Mn(2+) binding site.

It belongs to the glycosyl hydrolase 4 family. As to quaternary structure, homotetramer. The cofactor is NAD(+). Requires Mn(2+) as cofactor.

The catalysed reaction is [(1-&gt;4)-alpha-D-galacturonosyl](n) + H2O = alpha-D-galacturonate + [(1-&gt;4)-alpha-D-galacturonosyl](n-1). Functionally, alpha-galacturonidase able to catalyze the hydrolysis of the chromogenic substrate p-nitrophenyl-alpha-D-galacturonic acid (pNPalphaGalUA). It is probable that alpha-1,4-di-galacturonate (GalUA(2)) is the naturally occurring substrate. This Thermoanaerobacterium saccharolyticum (strain DSM 8691 / JW/SL-YS485) protein is Alpha-galacturonidase.